The chain runs to 762 residues: Chondroadherin-like protein (762 aa).

An N-terminal signal peptide occupies residues 1-30; it reads MEGPRSSTHVPLVLPLLVLLLLAPARQAAA. The LRRNT 1 domain maps to 31-62; that stretch reads QRCPQACICDNSRRHVACRYQNLTEVPDAIPE. N-linked (GlcNAc...) asparagine glycosylation occurs at asparagine 52. 9 LRR repeats span residues 87–108, 111–132, 135–156, 159–180, 183–204, 207–228, 231–252, 255–276, and 279–300; these read HLTH…AFRG, RLLL…ALDG, SLRR…TFGA, ALAT…AFQG, RVRW…ALAG, ALRR…VLSQ, GLAR…DGLA, GLRE…AFAH, and RLHT…QGPG. In terms of domain architecture, LRRCT 1 spans 310 to 359; it reads NPLWCGCQARPLLEWLARARVRSDGACQGPRRLRGEALDALRPWDLRCPG. The tract at residues 364–390 is disordered; the sequence is EEEELEERAVAGPRAPPRGPPRGPGEE. Residues 377 to 386 show a composition bias toward pro residues; the sequence is RAPPRGPPRG. In terms of domain architecture, LRRNT 2 spans 387–425; that stretch reads PGEERAVAPCPRACVCVPESRHSSCEGCGLQAVPRGFPS. Cysteine 396 and cysteine 411 are joined by a disulfide. 10 LRR repeats span residues 426–447, 450–471, 474–495, 498–519, 522–543, 546–566, 570–591, 594–615, 619–640, and 644–665; these read DTQL…AFPG, HLVS…ALAG, RLIY…ALEG, RLGY…ALRA, SLFS…DLGR, ALRW…GALG, ELEK…ALEG, ALLE…AFQP, SLQH…AFSG, and GLQS…PSLS. A glycan (N-linked (GlcNAc...) asparagine) is linked at asparagine 626. Positions 675 to 724 constitute an LRRCT 2 domain; the sequence is NPFHCDCQLLPLHRWLTGLNLRVGATCATPPNARGQRVKAAAAVFEDCPG. 2 cysteine pairs are disulfide-bonded: cysteine 679-cysteine 722 and cysteine 681-cysteine 701. Residues 728-745 show a composition bias toward basic residues; that stretch reads RKAKRTPASRPSARRTPI. A disordered region spans residues 728–762; the sequence is RKAKRTPASRPSARRTPIKGRQCGADKVGKEKGRL.

Belongs to the small leucine-rich proteoglycan (SLRP) family. SLRP class IV subfamily. Associates with collagen and binds to collagen fibrils.

Its subcellular location is the secreted. The protein resides in the extracellular space. It is found in the extracellular matrix. In terms of biological role, potential negative modulator of chondrocyte differentiation. Inhibits collagen fibrillogenesis in vitro. May influence chondrocyte's differentiation by acting on its cellular collagenous microenvironment. This chain is Chondroadherin-like protein (CHADL), found in Homo sapiens (Human).